Reading from the N-terminus, the 142-residue chain is MAKKVQAYVKLQVAAGMANPSPPVGPALGQQGVNIMEFCKAFNAKTDSIEKGLPIPVVITVYADRSFTFVTKTPPAAVLLKKAAGIKSGAGKPNKDKVGKISRAQLQEIAQTKAADMTGADIEAMTRSIEGTARSMGLVVED.

It belongs to the universal ribosomal protein uL11 family. Part of the ribosomal stalk of the 50S ribosomal subunit. Interacts with L10 and the large rRNA to form the base of the stalk. L10 forms an elongated spine to which L12 dimers bind in a sequential fashion forming a multimeric L10(L12)X complex. One or more lysine residues are methylated.

In terms of biological role, forms part of the ribosomal stalk which helps the ribosome interact with GTP-bound translation factors. The polypeptide is Large ribosomal subunit protein uL11 (Shigella boydii serotype 4 (strain Sb227)).